Here is a 248-residue protein sequence, read N- to C-terminus: 2,3-bisphosphoglycerate-dependent phosphoglycerate mutase (248 aa).

Substrate is bound by residues 8-15 (RHGESEWN), 21-22 (TG), R60, 87-90 (ERHY), K98, 114-115 (RR), and 183-184 (GN). H9 functions as the Tele-phosphohistidine intermediate in the catalytic mechanism. The Proton donor/acceptor role is filled by E87.

It belongs to the phosphoglycerate mutase family. BPG-dependent PGAM subfamily.

It carries out the reaction (2R)-2-phosphoglycerate = (2R)-3-phosphoglycerate. It functions in the pathway carbohydrate degradation; glycolysis; pyruvate from D-glyceraldehyde 3-phosphate: step 3/5. In terms of biological role, catalyzes the interconversion of 2-phosphoglycerate and 3-phosphoglycerate. The chain is 2,3-bisphosphoglycerate-dependent phosphoglycerate mutase from Borrelia garinii subsp. bavariensis (strain ATCC BAA-2496 / DSM 23469 / PBi) (Borreliella bavariensis).